The primary structure comprises 494 residues: Cytochrome P450 2A7 (494 aa).

Heme is bound at residue cysteine 439.

Belongs to the cytochrome P450 family. Heme is required as a cofactor.

Its subcellular location is the endoplasmic reticulum membrane. The protein localises to the microsome membrane. It catalyses the reaction an organic molecule + reduced [NADPH--hemoprotein reductase] + O2 = an alcohol + oxidized [NADPH--hemoprotein reductase] + H2O + H(+). Its function is as follows. Cytochromes P450 are a group of heme-thiolate monooxygenases. In liver microsomes, this enzyme is involved in an NADPH-dependent electron transport pathway. It oxidizes a variety of structurally unrelated compounds, including steroids, fatty acids, and xenobiotics. The polypeptide is Cytochrome P450 2A7 (CYP2A7) (Homo sapiens (Human)).